A 577-amino-acid chain; its full sequence is Autophagy-related protein 20 (577 aa).

The interval 57-81 (GQSYVAPHSGGGRTSSGSSSSASLQ) is disordered. In terms of domain architecture, PX spans 95 to 239 (GEQGRVRILE…DFLDPNNANW (145 aa)). R131, S133, K157, and R205 together coordinate a 1,2-diacyl-sn-glycero-3-phospho-(1D-myo-inositol-3-phosphate).

Belongs to the sorting nexin family.

It localises to the endosome membrane. It is found in the preautophagosomal structure membrane. In terms of biological role, required for cytoplasm to vacuole transport (Cvt), pexophagy and mitophagy. Also involved in endoplasmic reticulum-specific autophagic process and is essential for the survival of cells subjected to severe ER stress. Functions in protein retrieval from the endocytic pathway. The sequence is that of Autophagy-related protein 20 (ATG20) from Eremothecium gossypii (strain ATCC 10895 / CBS 109.51 / FGSC 9923 / NRRL Y-1056) (Yeast).